The chain runs to 188 residues: Protease-associated domain-containing protein 1 (188 aa).

A signal peptide spans 1–21; it reads MSRGAAGWCCLVLWLPTCVAA. A PA domain is found at 83-163; the sequence is IQDQIALVER…RSLEQHGLPW (81 aa). 2 N-linked (GlcNAc...) asparagine glycosylation sites follow: Asn121 and Asn171.

Post-translationally, N-glycosylated; required for efficient secretion. In terms of tissue distribution, expressed in metabolically active tissues such as liver, muscle, adipose, and heart and different brain regions like cortex and hypothalamus, expression is acutely regulated by the nutritional state.

Its subcellular location is the secreted. In terms of biological role, plays a role in the modulation of physical activity and adiposity. The sequence is that of Protease-associated domain-containing protein 1 from Mus musculus (Mouse).